The sequence spans 265 residues: DNA repair protein RecO (265 aa).

It belongs to the RecO family.

In terms of biological role, involved in DNA repair and RecF pathway recombination. The sequence is that of DNA repair protein RecO from Mycobacterium ulcerans (strain Agy99).